The primary structure comprises 104 residues: Turripeptide OL55-like (104 aa).

In terms of processing, contains 8 disulfide bonds. In terms of tissue distribution, expressed by the venom duct.

It localises to the secreted. Functionally, acts as a neurotoxin by inhibiting an ion channel. This is Turripeptide OL55-like from Iotyrris cingulifera (Sea snail).